Reading from the N-terminus, the 83-residue chain is Acyl carrier protein MmaB (83 aa).

Positions 3 to 83 (DPVRQRILLA…LSQSELESPT (81 aa)) constitute a Carrier domain. Serine 39 carries the O-(pantetheine 4'-phosphoryl)serine modification.

The protein belongs to the acyl carrier protein (ACP) family. The cofactor is pantetheine 4'-phosphate.

Its pathway is lipid metabolism; fatty acid metabolism. Acyl-carrier protein (ACP) involved in the biosynthesis of a unique class of isonitrile lipopeptides (INLPs) that seem to play a role in metal acquisition in M.marinum. Is the dedicated ACP for the loading of activated acyl groups catalyzed by MmaC. In Mycobacterium marinum (strain ATCC BAA-535 / M), this protein is Acyl carrier protein MmaB.